A 174-amino-acid polypeptide reads, in one-letter code: Protein COFACTOR ASSEMBLY OF COMPLEX C SUBUNIT B CCB3, chloroplastic (174 aa).

Residues 1–39 (MTTVTTSFVSFSPALMIFQKKSRRSSPNFRNRSTSLPIV) constitute a chloroplast transit peptide. At 40–78 (SATLSHIEEAATTTNLIRQTNSISESLRNISLADLDPGT) the chain is on the lumenal side. A helical membrane pass occupies residues 79–99 (AKLAIGILGPALSAFGFLFIL). Topologically, residues 100–147 (RIVMSWYPKLPVDKFPYVLAYAPTEPILVQTRKVIPPLAGVDVTPVVW) are stromal. Residues 148–168 (FGLVSFLSEILVGPQGLLVLV) traverse the membrane as a helical segment. Residues 169-174 (SQQQVN) lie on the Lumenal side of the membrane.

The protein belongs to the YggT family.

The protein resides in the plastid. It is found in the chloroplast thylakoid membrane. Required for the biogenesis and accumulation of native cytochrome b6 in the thylakoid membrane. Controls the conversion of apocytochrome b6 to holocytochrome b6. Required for covalent binding of the c-type heme to cytochrome b6. In Arabidopsis thaliana (Mouse-ear cress), this protein is Protein COFACTOR ASSEMBLY OF COMPLEX C SUBUNIT B CCB3, chloroplastic.